Here is a 130-residue protein sequence, read N- to C-terminus: Small ribosomal subunit protein uS11 (130 aa).

A compositionally biased stretch (basic residues) spans 1-15 (MARPTKKSGPRKQKR). The tract at residues 1–21 (MARPTKKSGPRKQKRNVPSGV) is disordered.

The protein belongs to the universal ribosomal protein uS11 family. As to quaternary structure, part of the 30S ribosomal subunit. Interacts with proteins S7 and S18. Binds to IF-3.

Functionally, located on the platform of the 30S subunit, it bridges several disparate RNA helices of the 16S rRNA. Forms part of the Shine-Dalgarno cleft in the 70S ribosome. The polypeptide is Small ribosomal subunit protein uS11 (Synechococcus elongatus (strain ATCC 33912 / PCC 7942 / FACHB-805) (Anacystis nidulans R2)).